The primary structure comprises 458 residues: MALWGGRFKQEADAKFKFFNDSLRFDYRLALQDIDGSIGWAKAITSVGILTEQEHQQLVVALKELRAEIESNIAIILRDDAEDIHSWVESKLIEKVGDLGKKLHTGRSRNDQVAVDMKMWCKVQAVVLQERIRNLQHKLVETAEANQNAVMPGYTHLQRAQPITFAHWCMAYYEMLERDFSRLTDAYKRMHTCPLGSGALAGTAYSIDRDALAQDLGFAIGTRNSLDSVSDRDHVLELLSTASISMVHLSRFAEDLIFFNSGESAFLELSDRVTSGSSLMPQKKNPDACELIRGKSGRVFGALSGLLTTLKGLPLAYNKDMQEDKEGIFDAMETWQACLEIGALVLEDINVNVERTREAAQQGYSNATELADYLVAKGIPFREAHHIVGEAVVYAISKREPLEALSVAEFKQFHPVIDEDVYPILSLESCLEKRSAKGGVNPERVREAIEAAKVNLGA.

Belongs to the lyase 1 family. Argininosuccinate lyase subfamily.

It localises to the cytoplasm. The enzyme catalyses 2-(N(omega)-L-arginino)succinate = fumarate + L-arginine. It participates in amino-acid biosynthesis; L-arginine biosynthesis; L-arginine from L-ornithine and carbamoyl phosphate: step 3/3. This is Argininosuccinate lyase from Actinobacillus pleuropneumoniae serotype 5b (strain L20).